Consider the following 294-residue polypeptide: Protoheme IX farnesyltransferase (294 aa).

9 helical membrane passes run 22 to 42 (VTQL…PELP), 46 to 66 (IVVA…AINC), 89 to 109 (ITVP…MWVL), 116 to 136 (LTMW…TIIL), 143 to 163 (NIVI…AAVA), 170 to 190 (AWIL…ALAL), 212 to 232 (FTQF…MLPF), 234 to 254 (VGMS…IFVW), and 272 to 292 (FAYS…DHYL).

It belongs to the UbiA prenyltransferase family. Protoheme IX farnesyltransferase subfamily.

It is found in the cell inner membrane. It carries out the reaction heme b + (2E,6E)-farnesyl diphosphate + H2O = Fe(II)-heme o + diphosphate. The protein operates within porphyrin-containing compound metabolism; heme O biosynthesis; heme O from protoheme: step 1/1. Converts heme B (protoheme IX) to heme O by substitution of the vinyl group on carbon 2 of heme B porphyrin ring with a hydroxyethyl farnesyl side group. This chain is Protoheme IX farnesyltransferase, found in Janthinobacterium sp. (strain Marseille) (Minibacterium massiliensis).